The following is a 263-amino-acid chain: MEIILFDNKINSRFNKVTSTNYAAKLDQTSEIWLFNCIENTQHIFLKSQLKLSQITKIFISGTSFKYAAGLPGLLSSLTLSGKINTVSIYGPNSLKAYLQACTKYSQTNFSFSVNFHAVSYGKLVSGQSYTVICLPLSSNKLLYGFTILKKQQQGVFNLKKAITLNISQGPIYGELKGKHNFLSPDGYYLHGEDFSSSTTLGNKISIPVVLKYSRIISEMHWLSSYTVKSNTYPHQQATKYLLSNIETNVMNYQVSQDNNLIE.

It belongs to the AtsA family.

The protein resides in the plastid. It localises to the chloroplast. This is an uncharacterized protein from Porphyra purpurea (Red seaweed).